Here is a 914-residue protein sequence, read N- to C-terminus: Alanine--tRNA ligase (914 aa).

Residues H613, H617, C717, and H721 each contribute to the Zn(2+) site.

It belongs to the class-II aminoacyl-tRNA synthetase family. The cofactor is Zn(2+).

The protein localises to the cytoplasm. It carries out the reaction tRNA(Ala) + L-alanine + ATP = L-alanyl-tRNA(Ala) + AMP + diphosphate. Its function is as follows. Catalyzes the attachment of alanine to tRNA(Ala) in a two-step reaction: alanine is first activated by ATP to form Ala-AMP and then transferred to the acceptor end of tRNA(Ala). Also edits incorrectly charged Ser-tRNA(Ala) and Gly-tRNA(Ala) via its editing domain. This is Alanine--tRNA ligase from Pyrococcus abyssi (strain GE5 / Orsay).